Here is a 217-residue protein sequence, read N- to C-terminus: Somatotropin (217 aa).

The signal sequence occupies residues 1–26 (MAPGSRTSLLLAFGLLCLPWLQEGSA). H44 serves as a coordination point for Zn(2+). C79 and C191 form a disulfide bridge. S132 bears the Phosphoserine mark. E200 is a binding site for Zn(2+). A disulfide bridge connects residues C208 and C215.

The protein belongs to the somatotropin/prolactin family.

The protein resides in the secreted. In terms of biological role, plays an important role in growth control. Its major role in stimulating body growth is to stimulate the liver and other tissues to secrete IGF1. It stimulates both the differentiation and proliferation of myoblasts. It also stimulates amino acid uptake and protein synthesis in muscle and other tissues. This is Somatotropin (GH1) from Pan troglodytes (Chimpanzee).